The sequence spans 453 residues: Probable glycine dehydrogenase (decarboxylating) subunit 1 (453 aa).

The protein belongs to the GcvP family. N-terminal subunit subfamily. In terms of assembly, the glycine cleavage system is composed of four proteins: P, T, L and H. In this organism, the P 'protein' is a heterodimer of two subunits.

It carries out the reaction N(6)-[(R)-lipoyl]-L-lysyl-[glycine-cleavage complex H protein] + glycine + H(+) = N(6)-[(R)-S(8)-aminomethyldihydrolipoyl]-L-lysyl-[glycine-cleavage complex H protein] + CO2. The glycine cleavage system catalyzes the degradation of glycine. The P protein binds the alpha-amino group of glycine through its pyridoxal phosphate cofactor; CO(2) is released and the remaining methylamine moiety is then transferred to the lipoamide cofactor of the H protein. The chain is Probable glycine dehydrogenase (decarboxylating) subunit 1 from Erythrobacter litoralis (strain HTCC2594).